We begin with the raw amino-acid sequence, 76 residues long: Acyl carrier protein (76 aa).

Residues 1 to 76 (MATFDDVKDV…AAIDYIESKQ (76 aa)) enclose the Carrier domain. Position 36 is an O-(pantetheine 4'-phosphoryl)serine (Ser-36).

It belongs to the acyl carrier protein (ACP) family. In terms of processing, 4'-phosphopantetheine is transferred from CoA to a specific serine of apo-ACP by AcpS. This modification is essential for activity because fatty acids are bound in thioester linkage to the sulfhydryl of the prosthetic group.

The protein resides in the cytoplasm. It functions in the pathway lipid metabolism; fatty acid biosynthesis. Its function is as follows. Carrier of the growing fatty acid chain in fatty acid biosynthesis. The protein is Acyl carrier protein of Deinococcus deserti (strain DSM 17065 / CIP 109153 / LMG 22923 / VCD115).